Here is a 335-residue protein sequence, read N- to C-terminus: Glycerol-3-phosphate dehydrogenase [NAD(P)+] (335 aa).

Residues S12, W13, and K107 each coordinate NADPH. Residues K107, G138, and S140 each contribute to the sn-glycerol 3-phosphate site. A142 provides a ligand contact to NADPH. K193, D246, S256, R257, and N258 together coordinate sn-glycerol 3-phosphate. Catalysis depends on K193, which acts as the Proton acceptor. R257 is a binding site for NADPH. NADPH is bound by residues V281 and E283.

It belongs to the NAD-dependent glycerol-3-phosphate dehydrogenase family.

Its subcellular location is the cytoplasm. The catalysed reaction is sn-glycerol 3-phosphate + NAD(+) = dihydroxyacetone phosphate + NADH + H(+). It catalyses the reaction sn-glycerol 3-phosphate + NADP(+) = dihydroxyacetone phosphate + NADPH + H(+). It functions in the pathway membrane lipid metabolism; glycerophospholipid metabolism. Its function is as follows. Catalyzes the reduction of the glycolytic intermediate dihydroxyacetone phosphate (DHAP) to sn-glycerol 3-phosphate (G3P), the key precursor for phospholipid synthesis. This chain is Glycerol-3-phosphate dehydrogenase [NAD(P)+], found in Geobacter sulfurreducens (strain ATCC 51573 / DSM 12127 / PCA).